The chain runs to 153 residues: Histone H2B.10 (153 aa).

Composition is skewed to basic and acidic residues over residues 1–28 (MAPK…EKAP) and 36–53 (EKRL…EGKK). Residues 1–61 (MAPKAEKKPA…KKAGRKKAKK (61 aa)) are disordered. 2 positions are modified to N6-acetyllysine: lysine 7 and lysine 37. Lysine 149 participates in a covalent cross-link: Glycyl lysine isopeptide (Lys-Gly) (interchain with G-Cter in ubiquitin).

Belongs to the histone H2B family. In terms of assembly, the nucleosome is a histone octamer containing two molecules each of H2A, H2B, H3 and H4 assembled in one H3-H4 heterotetramer and two H2A-H2B heterodimers. The octamer wraps approximately 147 bp of DNA. Post-translationally, can be acetylated to form H2BK6ac and H2BK33ac. In terms of processing, monoubiquitinated by BRE1 to form H2BK143ub1 and deubiquitinated by UBP26. Required for heterochromatic histone H3 di- and trimethylation at H3K4me. May give a specific tag for epigenetic transcriptional activation.

The protein resides in the nucleus. The protein localises to the chromosome. Its function is as follows. Core component of nucleosome. Nucleosomes wrap and compact DNA into chromatin, limiting DNA accessibility to the cellular machineries which require DNA as a template. Histones thereby play a central role in transcription regulation, DNA repair, DNA replication and chromosomal stability. DNA accessibility is regulated via a complex set of post-translational modifications of histones, also called histone code, and nucleosome remodeling. The polypeptide is Histone H2B.10 (H2B.10) (Oryza sativa subsp. indica (Rice)).